The following is an 873-amino-acid chain: Bifunctional uridylyltransferase/uridylyl-removing enzyme (873 aa).

Residues 1-332 (MKYLSPLSLS…HQGEQDDAII (332 aa)) are uridylyltransferase. The tract at residues 333-692 (IDDDFQRRGR…ISKNASRGGT (360 aa)) is uridylyl-removing. The 123-residue stretch at 451-573 (VDEHSIRLLK…VRDEERLDYL (123 aa)) folds into the HD domain. ACT domains are found at residues 693-777 (EIFV…RPPR) and 800-873 (LMEF…RLSS).

Belongs to the GlnD family. Mg(2+) is required as a cofactor.

The enzyme catalyses [protein-PII]-L-tyrosine + UTP = [protein-PII]-uridylyl-L-tyrosine + diphosphate. The catalysed reaction is [protein-PII]-uridylyl-L-tyrosine + H2O = [protein-PII]-L-tyrosine + UMP + H(+). Uridylyltransferase (UTase) activity is inhibited by glutamine, while glutamine activates uridylyl-removing (UR) activity. Functionally, modifies, by uridylylation and deuridylylation, the PII regulatory proteins (GlnB and homologs), in response to the nitrogen status of the cell that GlnD senses through the glutamine level. Under low glutamine levels, catalyzes the conversion of the PII proteins and UTP to PII-UMP and PPi, while under higher glutamine levels, GlnD hydrolyzes PII-UMP to PII and UMP (deuridylylation). Thus, controls uridylylation state and activity of the PII proteins, and plays an important role in the regulation of nitrogen assimilation and metabolism. This is Bifunctional uridylyltransferase/uridylyl-removing enzyme from Aliivibrio fischeri (strain MJ11) (Vibrio fischeri).